Reading from the N-terminus, the 463-residue chain is uncharacterized protein (463 aa).

A signal peptide spans 1-23; the sequence is MKFSSIPIASTLLSLLVASSVTA. 2 disordered regions span residues 174–200 and 239–258; these read STYN…TKAS and GAST…QRKN.

This sequence belongs to the but2 family.

The protein localises to the cytoplasm. This is an uncharacterized protein from Schizosaccharomyces pombe (strain 972 / ATCC 24843) (Fission yeast).